We begin with the raw amino-acid sequence, 213 residues long: Small ribosomal subunit protein uS4 (213 aa).

A disordered region spans residues G16 to S53. Residues V44–S53 are compositionally biased toward polar residues. Residues S97–K163 enclose the S4 RNA-binding domain.

It belongs to the universal ribosomal protein uS4 family. In terms of assembly, part of the 30S ribosomal subunit. Contacts protein S5. The interaction surface between S4 and S5 is involved in control of translational fidelity.

Its function is as follows. One of the primary rRNA binding proteins, it binds directly to 16S rRNA where it nucleates assembly of the body of the 30S subunit. Functionally, with S5 and S12 plays an important role in translational accuracy. This is Small ribosomal subunit protein uS4 from Psychrobacter cryohalolentis (strain ATCC BAA-1226 / DSM 17306 / VKM B-2378 / K5).